A 461-amino-acid chain; its full sequence is Homocitrate synthase (461 aa).

The region spanning 4–259 (VGILDSTLRE…IEVVKLDKLQ (256 aa)) is the Pyruvate carboxyltransferase domain. Arginine 12 contributes to the 2-oxoglutarate binding site. Glutamate 13 is a Mg(2+) binding site. Residues histidine 76, arginine 136, and threonine 170 each coordinate 2-oxoglutarate. Residues histidine 198 and histidine 200 each coordinate Mg(2+). The active-site Proton acceptor is the histidine 292.

It belongs to the alpha-IPM synthase/homocitrate synthase family. Homocitrate synthase LYS20/LYS21 subfamily. Mg(2+) serves as cofactor. Requires Mn(2+) as cofactor.

It catalyses the reaction acetyl-CoA + 2-oxoglutarate + H2O = (2R)-homocitrate + CoA + H(+). It functions in the pathway amino-acid biosynthesis; L-lysine biosynthesis via AAA pathway; L-alpha-aminoadipate from 2-oxoglutarate: step 1/5. Functionally, catalyzes the aldol-type condensation of 2-oxoglutarate with acetyl-CoA to yield homocitrate. Carries out the first step of the alpha-aminoadipate (AAA) lysine biosynthesis pathway. The protein is Homocitrate synthase of Saccharolobus islandicus (strain L.S.2.15 / Lassen #1) (Sulfolobus islandicus).